The primary structure comprises 345 residues: MLYSPKKLFLFFLSCIVLYVNSNNSGFVTAANSIGLNYGLLGDNLPSPSNVINLYKSIGISRIRIFDPNTEVLNALRGHRDIEVTVGVKDQDLAALAASEEAVKGWFAANIESYLADVNITFITVGNEVIPGPIGPQVLPVMQSLTNLVKSRNLPISISTVVAMSNLEQSYPPSAGMFTSQAREQLVPVLKLLSQTSTPILVNIYPYFAYASDPANIRLDYASFNTKSIVVQDGSLGYSNMFDAIFDAFVWAMEKEGVKNLPMVVSETGWPSAGNGNFTTPAIASTYNRNFVKHIASGKGTPKRPNKSMNGFLFATFNENQKPAGTEQNFGLYNPSDMKPIYKLF.

Positions 1–22 (MLYSPKKLFLFFLSCIVLYVNS) are cleaved as a signal peptide. Asn-23 and Asn-119 each carry an N-linked (GlcNAc...) asparagine glycan. The active-site Proton donor is the Glu-128. Catalysis depends on Glu-267, which acts as the Nucleophile. Residues Asn-277 and Asn-306 are each glycosylated (N-linked (GlcNAc...) asparagine).

Belongs to the glycosyl hydrolase 17 family.

The protein resides in the secreted. The catalysed reaction is Hydrolysis of (1-&gt;3)-beta-D-glucosidic linkages in (1-&gt;3)-beta-D-glucans.. In terms of biological role, may play a role in plant defense against pathogens. This Arabidopsis thaliana (Mouse-ear cress) protein is Probable glucan endo-1,3-beta-glucosidase BG4.